Reading from the N-terminus, the 318-residue chain is tRNA pseudouridine synthase B (318 aa).

Aspartate 54 acts as the Nucleophile in catalysis.

Belongs to the pseudouridine synthase TruB family. Type 1 subfamily.

It carries out the reaction uridine(55) in tRNA = pseudouridine(55) in tRNA. Functionally, responsible for synthesis of pseudouridine from uracil-55 in the psi GC loop of transfer RNAs. The protein is tRNA pseudouridine synthase B of Ralstonia pickettii (strain 12J).